The chain runs to 453 residues: Nuclear distribution protein PAC1-2 (453 aa).

Residues 9-41 enclose the LisH domain; it reads QADELHKSIVAYLTANNLSTTAATLREELSLGE. A coiled-coil region spans residues 63–87; the sequence is VVRLQKKVMDLESRSVALQSELEHS. The tract at residues 84–108 is disordered; the sequence is LEHSTPASLSKRKDPTSWLPRSPPR. WD repeat units lie at residues 113 to 154, 156 to 196, 200 to 243, 246 to 285, 290 to 350, 352 to 391, and 396 to 448; these read SHQA…RTLK, HTRA…KNTR, GHDH…CIKT, GHTG…PESK, GHEN…IKTL, GHDN…RCVK, and AHGQ…DKVV.

Belongs to the WD repeat LIS1/nudF family. Self-associates. Interacts with NDL1 and dynein.

The protein localises to the cytoplasm. The protein resides in the cytoskeleton. Its subcellular location is the spindle pole. Functionally, positively regulates the activity of the minus-end directed microtubule motor protein dynein. May enhance dynein-mediated microtubule sliding by targeting dynein to the microtubule plus end. Required for nuclear migration during vegetative growth as well as development. Required for retrograde early endosome (EE) transport from the hyphal tip. Required for localization of dynein to the mitotic spindle poles. Recruits additional proteins to the dynein complex at SPBs. The chain is Nuclear distribution protein PAC1-2 from Chaetomium globosum (strain ATCC 6205 / CBS 148.51 / DSM 1962 / NBRC 6347 / NRRL 1970) (Soil fungus).